A 559-amino-acid chain; its full sequence is Apolipoprotein N-acyltransferase 2 (559 aa).

6 helical membrane passes run 27–47 (LAGS…GFLL), 53–73 (HVAC…SFWL), 86–106 (ASTV…ACIL), 114–134 (ACAF…GILA), 153–173 (IADI…NACV), and 187–207 (VPVF…SLYG). The CN hydrolase domain occupies 221-507 (LALAIVQQNA…SAVLHVPVYP (287 aa)). The Proton acceptor role is filled by Glu288. Residue Lys358 is part of the active site. Cys416 functions as the Nucleophile in the catalytic mechanism. Residues 519–539 (WVIVLCALIFFAEGVRMAVHT) form a helical membrane-spanning segment.

The protein belongs to the CN hydrolase family. Apolipoprotein N-acyltransferase subfamily.

It localises to the cell inner membrane. The catalysed reaction is N-terminal S-1,2-diacyl-sn-glyceryl-L-cysteinyl-[lipoprotein] + a glycerophospholipid = N-acyl-S-1,2-diacyl-sn-glyceryl-L-cysteinyl-[lipoprotein] + a 2-acyl-sn-glycero-3-phospholipid + H(+). The protein operates within protein modification; lipoprotein biosynthesis (N-acyl transfer). Functionally, catalyzes the phospholipid dependent N-acylation of the N-terminal cysteine of apolipoprotein, the last step in lipoprotein maturation. In Treponema pallidum (strain Nichols), this protein is Apolipoprotein N-acyltransferase 2.